Reading from the N-terminus, the 550-residue chain is Coiled-coil domain-containing protein 102A (550 aa).

Disordered stretches follow at residues 1-69 and 138-247; these read MSHG…DGDW and GARR…ATEE. A phosphoserine mark is found at S12, S26, and S28. The span at 37–61 shows a compositional bias: pro residues; it reads SLPPTPPSGTPSPGPPPALPLPPAP. A coiled-coil region spans residues 72-161; that stretch reads REELRLRELE…ARGRELARLR (90 aa). 2 stretches are compositionally biased toward basic and acidic residues: residues 138 to 159 and 169 to 188; these read GARR…ELAR and QTRD…DVGS. Coiled coils occupy residues 263–396 and 427–518; these read QKVL…RRQT and KLKK…NAPL. Disordered regions lie at residues 472–497 and 509–550; these read DELD…QSEN and LRRQ…IQVA. The segment covering 530–550 has biased composition (acidic residues); sequence EEAEDGTSDLDEDEDLQIQVA. At S537 the chain carries Phosphoserine.

This is Coiled-coil domain-containing protein 102A (CCDC102A) from Homo sapiens (Human).